The primary structure comprises 534 residues: Cytochalasin cluster regulator ccsR (534 aa).

Positions 13-54 (CDRCRRQKLRCVRPLKHGACEHPNNIEALEPCERCSRAGTPC) form a DNA-binding region, zn(2)-C6 fungal-type. 2 disordered regions span residues 88-170 (IPKQ…LDAP) and 350-378 (TSAR…SAAS). Over residues 109–125 (TGQNKGINDANAVTGSL) the composition is skewed to polar residues. Positions 130 to 146 (PDHRSGSNVHRQPEARP) are enriched in basic and acidic residues. Residues 361–378 (DMCASSSNRDSSDLSAAS) are compositionally biased toward low complexity.

It localises to the nucleus. Functionally, transcription factor involved in regulation of gene cluster that mediates the biosynthesis of the mycotoxins cytochalasins E and K. The polypeptide is Cytochalasin cluster regulator ccsR (Aspergillus clavatus (strain ATCC 1007 / CBS 513.65 / DSM 816 / NCTC 3887 / NRRL 1 / QM 1276 / 107)).